Consider the following 213-residue polypeptide: Transcriptional regulatory protein YdfI (213 aa).

One can recognise a Response regulatory domain in the interval 3-118 (KVLIVDDHLV…TLFHTMDAAI (116 aa)). At aspartate 54 the chain carries 4-aspartylphosphate. Residues 142 to 207 (KQRNETQLTE…EAVTIAMQKG (66 aa)) enclose the HTH luxR-type domain. Positions 166–185 (SKAIAFDLGVSERTVKSRLT) form a DNA-binding region, H-T-H motif.

Post-translationally, phosphorylated by YdfH.

The protein localises to the cytoplasm. Functionally, member of the two-component regulatory system YdfH/YdfI. Regulates the transcription of ydfJ by binding to its promoter region. The polypeptide is Transcriptional regulatory protein YdfI (ydfI) (Bacillus subtilis (strain 168)).